A 193-amino-acid chain; its full sequence is Xanthine phosphoribosyltransferase (193 aa).

2 residues coordinate xanthine: Leu20 and Thr27. 128–132 (ANGQA) contributes to the 5-phospho-alpha-D-ribose 1-diphosphate binding site. Residue Lys156 participates in xanthine binding.

It belongs to the purine/pyrimidine phosphoribosyltransferase family. Xpt subfamily. Homodimer.

The protein resides in the cytoplasm. The enzyme catalyses XMP + diphosphate = xanthine + 5-phospho-alpha-D-ribose 1-diphosphate. Its pathway is purine metabolism; XMP biosynthesis via salvage pathway; XMP from xanthine: step 1/1. Converts the preformed base xanthine, a product of nucleic acid breakdown, to xanthosine 5'-monophosphate (XMP), so it can be reused for RNA or DNA synthesis. The chain is Xanthine phosphoribosyltransferase from Streptococcus pneumoniae serotype 2 (strain D39 / NCTC 7466).